The following is a 631-amino-acid chain: ATP-dependent zinc metalloprotease FtsH (631 aa).

The Cytoplasmic portion of the chain corresponds to M1–N5. A helical transmembrane segment spans residues P6–A26. Topologically, residues R27–G102 are periplasmic. A helical membrane pass occupies residues W103–W123. The Cytoplasmic portion of the chain corresponds to M124–S631. Residue G196–T203 participates in ATP binding. Position 418 (H418) interacts with Zn(2+). The active site involves E419. Positions 422 and 494 each coordinate Zn(2+).

In the central section; belongs to the AAA ATPase family. It in the C-terminal section; belongs to the peptidase M41 family. In terms of assembly, homohexamer. It depends on Zn(2+) as a cofactor.

The protein resides in the cell inner membrane. Functionally, acts as a processive, ATP-dependent zinc metallopeptidase for both cytoplasmic and membrane proteins. Plays a role in the quality control of integral membrane proteins. This is ATP-dependent zinc metalloprotease FtsH from Endomicrobium trichonymphae.